We begin with the raw amino-acid sequence, 359 residues long: 4-hydroxy-3-methylbut-2-en-1-yl diphosphate synthase (flavodoxin) (359 aa).

4 residues coordinate [4Fe-4S] cluster: cysteine 264, cysteine 267, cysteine 299, and glutamate 306.

The protein belongs to the IspG family. The cofactor is [4Fe-4S] cluster.

It carries out the reaction (2E)-4-hydroxy-3-methylbut-2-enyl diphosphate + oxidized [flavodoxin] + H2O + 2 H(+) = 2-C-methyl-D-erythritol 2,4-cyclic diphosphate + reduced [flavodoxin]. It functions in the pathway isoprenoid biosynthesis; isopentenyl diphosphate biosynthesis via DXP pathway; isopentenyl diphosphate from 1-deoxy-D-xylulose 5-phosphate: step 5/6. Converts 2C-methyl-D-erythritol 2,4-cyclodiphosphate (ME-2,4cPP) into 1-hydroxy-2-methyl-2-(E)-butenyl 4-diphosphate. This Helicobacter pylori (strain HPAG1) protein is 4-hydroxy-3-methylbut-2-en-1-yl diphosphate synthase (flavodoxin).